The sequence spans 22 residues: thr operon leader peptide (22 aa).

This sequence belongs to the thr operon leader peptide family.

Functionally, this protein is involved in control of the biosynthesis of threonine. This is thr operon leader peptide from Yersinia enterocolitica serotype O:8 / biotype 1B (strain NCTC 13174 / 8081).